A 399-amino-acid polypeptide reads, in one-letter code: S-adenosylmethionine synthase (399 aa).

135–140 (GEGSTD) contributes to the ATP binding site.

It belongs to the AdoMet synthase 2 family. Requires Mg(2+) as cofactor.

The enzyme catalyses L-methionine + ATP + H2O = S-adenosyl-L-methionine + phosphate + diphosphate. It functions in the pathway amino-acid biosynthesis; S-adenosyl-L-methionine biosynthesis; S-adenosyl-L-methionine from L-methionine: step 1/1. Catalyzes the formation of S-adenosylmethionine from methionine and ATP. The protein is S-adenosylmethionine synthase (mat) of Archaeoglobus fulgidus (strain ATCC 49558 / DSM 4304 / JCM 9628 / NBRC 100126 / VC-16).